Reading from the N-terminus, the 415-residue chain is Histidine--tRNA ligase (415 aa).

This sequence belongs to the class-II aminoacyl-tRNA synthetase family. In terms of assembly, homodimer.

The protein resides in the cytoplasm. The catalysed reaction is tRNA(His) + L-histidine + ATP = L-histidyl-tRNA(His) + AMP + diphosphate + H(+). The polypeptide is Histidine--tRNA ligase (Idiomarina loihiensis (strain ATCC BAA-735 / DSM 15497 / L2-TR)).